A 285-amino-acid polypeptide reads, in one-letter code: ATP synthase gamma chain (285 aa).

Belongs to the ATPase gamma chain family. In terms of assembly, F-type ATPases have 2 components, CF(1) - the catalytic core - and CF(0) - the membrane proton channel. CF(1) has five subunits: alpha(3), beta(3), gamma(1), delta(1), epsilon(1). CF(0) has three main subunits: a, b and c.

The protein resides in the cell inner membrane. Produces ATP from ADP in the presence of a proton gradient across the membrane. The gamma chain is believed to be important in regulating ATPase activity and the flow of protons through the CF(0) complex. This Protochlamydia amoebophila (strain UWE25) protein is ATP synthase gamma chain.